The primary structure comprises 371 residues: Bifunctional enzyme IspD/IspF (371 aa).

The interval 1–210 is 2-C-methyl-D-erythritol 4-phosphate cytidylyltransferase; that stretch reads MSEISLIMLA…LDLPTPSFEI (210 aa). The tract at residues 211–371 is 2-C-methyl-D-erythritol 2,4-cyclodiphosphate synthase; it reads FTGNGFDVHE…NLKYFDWTRL (161 aa). 2 residues coordinate a divalent metal cation: Asp217 and His219. 4-CDP-2-C-methyl-D-erythritol 2-phosphate contacts are provided by residues 217 to 219 and 243 to 244; these read DVH and HS. Residue His251 coordinates a divalent metal cation. 4-CDP-2-C-methyl-D-erythritol 2-phosphate-binding positions include 265–267, 270–274, 341–344, Phe348, and Arg351; these read DIG, YPDTD, and TTTE.

This sequence in the N-terminal section; belongs to the IspD/TarI cytidylyltransferase family. IspD subfamily. The protein in the C-terminal section; belongs to the IspF family. Requires a divalent metal cation as cofactor.

The catalysed reaction is 2-C-methyl-D-erythritol 4-phosphate + CTP + H(+) = 4-CDP-2-C-methyl-D-erythritol + diphosphate. It carries out the reaction 4-CDP-2-C-methyl-D-erythritol 2-phosphate = 2-C-methyl-D-erythritol 2,4-cyclic diphosphate + CMP. It functions in the pathway isoprenoid biosynthesis; isopentenyl diphosphate biosynthesis via DXP pathway; isopentenyl diphosphate from 1-deoxy-D-xylulose 5-phosphate: step 2/6. It participates in isoprenoid biosynthesis; isopentenyl diphosphate biosynthesis via DXP pathway; isopentenyl diphosphate from 1-deoxy-D-xylulose 5-phosphate: step 4/6. Bifunctional enzyme that catalyzes the formation of 4-diphosphocytidyl-2-C-methyl-D-erythritol from CTP and 2-C-methyl-D-erythritol 4-phosphate (MEP) (IspD), and catalyzes the conversion of 4-diphosphocytidyl-2-C-methyl-D-erythritol 2-phosphate (CDP-ME2P) to 2-C-methyl-D-erythritol 2,4-cyclodiphosphate (ME-CPP) with a corresponding release of cytidine 5-monophosphate (CMP) (IspF). The polypeptide is Bifunctional enzyme IspD/IspF (Campylobacter jejuni subsp. jejuni serotype O:6 (strain 81116 / NCTC 11828)).